A 433-amino-acid chain; its full sequence is Chaperone SurA (433 aa).

A signal peptide spans 1–24; sequence MDGIKLLLSIIILYFYTYINCAIA. 2 PpiC domains span residues 173–274 and 285–385; these read NTTF…KVHD and ITEV…QLQN.

The protein resides in the periplasm. The enzyme catalyses [protein]-peptidylproline (omega=180) = [protein]-peptidylproline (omega=0). Functionally, chaperone involved in the correct folding and assembly of outer membrane proteins. Recognizes specific patterns of aromatic residues and the orientation of their side chains, which are found more frequently in integral outer membrane proteins. May act in both early periplasmic and late outer membrane-associated steps of protein maturation. This chain is Chaperone SurA, found in Baumannia cicadellinicola subsp. Homalodisca coagulata.